Reading from the N-terminus, the 159-residue chain is Neurotrophin-3 (159 aa).

A signal peptide spans Ile1–Ser3. Residues Thr4–Arg115 constitute a propeptide that is removed on maturation. Residues Ala91–Ser129 are disordered. Asn108 carries N-linked (GlcNAc...) asparagine glycosylation. A compositionally biased stretch (basic residues) spans Thr110 to Arg121.

This sequence belongs to the NGF-beta family.

The protein localises to the secreted. Functionally, seems to promote the survival of visceral and proprioceptive sensory neurons. The chain is Neurotrophin-3 (NTF3) from Candoia carinata (Papuan tree boa).